Reading from the N-terminus, the 186-residue chain is MISSNDFRTGTTIELDGQVWRVVEFLHVKPGKGSAFVRTKLKSVQSGNVVEKTFRAGESVQQAILEKSNLQHTYVESGDYVFMDMTSFEETRLSSEQIGKGSKYLKEGMEVNVILHNGKVLEVELPISITLKVTETDPGVKGDTASGGTKPAILETGAQVMVPLFISVGEMIKVDTRNDSYLGREN.

The protein belongs to the elongation factor P family.

It localises to the cytoplasm. The protein operates within protein biosynthesis; polypeptide chain elongation. In terms of biological role, involved in peptide bond synthesis. Stimulates efficient translation and peptide-bond synthesis on native or reconstituted 70S ribosomes in vitro. Probably functions indirectly by altering the affinity of the ribosome for aminoacyl-tRNA, thus increasing their reactivity as acceptors for peptidyl transferase. The polypeptide is Elongation factor P (Prochlorococcus marinus (strain MIT 9312)).